The primary structure comprises 145 residues: Cell wall teichoic acid glycosylation protein GtcA (145 aa).

4 helical membrane passes run 21–41 (ILMYLIMGGFTTLINIVTFWL), 52–69 (IANTIAWVASVLFAYFSN), 96–116 (FLTYLVDILVMILLIEVLSIN), and 121–141 (KIWTNVIVLVLNYVFSKWIIF).

This sequence belongs to the GtrA family.

Its subcellular location is the cell membrane. Involved in the decoration of cell wall teichoic acid with galactose and glucose. The polypeptide is Cell wall teichoic acid glycosylation protein GtcA (gtcA) (Listeria monocytogenes serovar 1/2a (strain ATCC BAA-679 / EGD-e)).